Here is a 133-residue protein sequence, read N- to C-terminus: Profilin (133 aa).

Belongs to the profilin family. In terms of assembly, interacts with host TPM1. Interacts with protein A25.

The protein localises to the host cytoplasm. In terms of biological role, participates in either intracellular transport of viral proteins or intercellular spread of the virus. Cellular profilins modulate actin filament dynamics (polymerization and depolymerization) via direct binding to actin through an actin-binding domain as well as by modulation of other actin-binding proteins. In contrast to cellular homologs, the poxvirus profilins seem to bind actin only weakly. This is Profilin (OPG171) from Variola virus (isolate Human/India/Ind3/1967) (VARV).